The sequence spans 521 residues: MALRAPTLLLLLLGLLLLPLLPGLPPRATGCPAACRCYSATVECGALRLRVVPPGIPPGTQTLFLQDNSIAHLEQGSLAPLAALRHLYLHNNTLRALESGAFRAQPRLLELALTGNRLRGLRGGAFVGLVQLRVLYLAGNQLAKLLDFTFLHLPRLQELHLQENSIELLEDQALAGLSSLALLDLSRNQLGTISKEALQPLSSLQVLRLTENPWRCDCALHWLGSWIKEGGRRLLSSRDKKITCAEPPRLALQSLLEVSGGSLICIPPSVNVEPPEFTANLGEDLQVACQASGYPQPLVVWRKVPQPRDGKPQAQAQLEGGAPGLGGHGTRDTGSGMLFLTNITLAHAGKYECEAANAGGKARVPFHLLVNASRQQSQQLPDPQAPATRPVGHEPQHEAGSMAFRALGLATQTAITAAIALLALTALLLAAMICRRRRRRKKVPAPSGEGTLFVNDYSDGPCTFAQLEELRDDHGHEMFVIDRSKPLFPEVLPEEAPEHNPPDGLKSGLRLPTRVAYEIHC.

The first 23 residues, 1–23, serve as a signal peptide directing secretion; sequence MALRAPTLLLLLLGLLLLPLLPG. The LRRNT domain maps to 24–58; sequence LPPRATGCPAACRCYSATVECGALRLRVVPPGIPP. 6 LRR repeats span residues 59-80, 83-104, 107-128, 131-152, 155-176, and 179-200; these read GTQT…SLAP, ALRH…AFRA, RLLE…AFVG, QLRV…TFLH, RLQE…ALAG, and SLAL…ALQP. Asn-91 carries an N-linked (GlcNAc...) asparagine glycan. Residues 212–267 enclose the LRRCT domain; it reads NPWRCDCALHWLGSWIKEGGRRLLSSRDKKITCAEPPRLALQSLLEVSGGSLICIP. The Ig-like C2-type domain maps to 268–371; the sequence is PSVNVEPPEF…ARVPFHLLVN (104 aa). Cysteines 289 and 353 form a disulfide. The tract at residues 306–330 is disordered; that stretch reads QPRDGKPQAQAQLEGGAPGLGGHGT. N-linked (GlcNAc...) asparagine glycans are attached at residues Asn-342 and Asn-371. The interval 374–395 is disordered; the sequence is RQQSQQLPDPQAPATRPVGHEP. A helical transmembrane segment spans residues 414–434; it reads AITAAIALLALTALLLAAMIC.

It is found in the membrane. In Mus musculus (Mouse), this protein is Leucine-rich repeat-containing protein 24 (Lrrc24).